A 146-amino-acid polypeptide reads, in one-letter code: Ribosome-binding factor A (146 aa).

The segment at 122-146 is disordered; that stretch reads QQQFGSVDDVTENDIDEADDTEGKA. The segment covering 130–146 has biased composition (acidic residues); sequence DVTENDIDEADDTEGKA.

It belongs to the RbfA family. As to quaternary structure, monomer. Binds 30S ribosomal subunits, but not 50S ribosomal subunits or 70S ribosomes.

It is found in the cytoplasm. Its function is as follows. One of several proteins that assist in the late maturation steps of the functional core of the 30S ribosomal subunit. Associates with free 30S ribosomal subunits (but not with 30S subunits that are part of 70S ribosomes or polysomes). Required for efficient processing of 16S rRNA. May interact with the 5'-terminal helix region of 16S rRNA. The chain is Ribosome-binding factor A from Shewanella sp. (strain MR-7).